The sequence spans 275 residues: Large ribosomal subunit protein uL2 (275 aa).

Residues 210 to 275 (GRNRHRGIRP…DKLIISRKKK (66 aa)) form a disordered region. A compositionally biased stretch (basic residues) spans 257-275 (FKTRKKKASDKLIISRKKK).

It belongs to the universal ribosomal protein uL2 family. In terms of assembly, part of the 50S ribosomal subunit. Forms a bridge to the 30S subunit in the 70S ribosome.

Its function is as follows. One of the primary rRNA binding proteins. Required for association of the 30S and 50S subunits to form the 70S ribosome, for tRNA binding and peptide bond formation. It has been suggested to have peptidyltransferase activity; this is somewhat controversial. Makes several contacts with the 16S rRNA in the 70S ribosome. This chain is Large ribosomal subunit protein uL2, found in Helicobacter hepaticus (strain ATCC 51449 / 3B1).